We begin with the raw amino-acid sequence, 20 residues long: Non-specific lipid-transfer protein (20 aa).

This sequence belongs to the plant LTP family.

Functionally, plant non-specific lipid-transfer proteins transfer phospholipids as well as galactolipids across membranes. May play a role in wax or cutin deposition in the cell walls of expanding epidermal cells and certain secretory tissues. The chain is Non-specific lipid-transfer protein from Citrus limon (Lemon).